Reading from the N-terminus, the 699-residue chain is D-(-)-3-hydroxybutyrate oligomer hydrolase (699 aa).

A signal peptide spans 1-33 (MTAIRGGSRRAPGLALALLGGVLLGACHGDENA). Ser311 (charge relay system) is an active-site residue.

It belongs to the D-(-)-3-hydroxybutyrate oligomer hydrolase family.

The protein resides in the secreted. It catalyses the reaction (3R)-hydroxybutanoate dimer + H2O = 2 (R)-3-hydroxybutanoate + H(+). It functions in the pathway lipid metabolism; butanoate metabolism. Participates in the degradation of poly-3-hydroxybutyrate (PHB). It works downstream of poly(3-hydroxybutyrate) depolymerase, hydrolyzing D(-)-3-hydroxybutyrate oligomers of various length (3HB-oligomers) into 3HB-monomers. This Burkholderia mallei (strain NCTC 10247) protein is D-(-)-3-hydroxybutyrate oligomer hydrolase.